The chain runs to 562 residues: ATP synthase subunit beta, mitochondrial (562 aa).

Low complexity-rich tracts occupy residues 1–13 (MASRRLLSSLLRS) and 20–40 (SKSPISNINPKLSSSSPSSKS). Disordered stretches follow at residues 1–43 (MASR…SRAS) and 58–83 (SAAAAAPPQPPPAKPEGGKGGGKITD). The N-terminal 55 residues, 1 to 55 (MASRRLLSSLLRSSSRRSVSKSPISNINPKLSSSSPSSKSRASPYGYLLTRAAEY), are a transit peptide targeting the mitochondrion. 237 to 244 (GGAGVGKT) lines the ATP pocket.

The protein belongs to the ATPase alpha/beta chains family. In terms of assembly, F-type ATPases have 2 components, CF(1) - the catalytic core - and CF(0) - the membrane proton channel. CF(1) has five subunits: alpha(3), beta(3), gamma(1), delta(1), epsilon(1). CF(0) has three main subunits: a, b and c.

The protein resides in the mitochondrion. It localises to the mitochondrion inner membrane. It catalyses the reaction ATP + H2O + 4 H(+)(in) = ADP + phosphate + 5 H(+)(out). In terms of biological role, mitochondrial membrane ATP synthase (F(1)F(0) ATP synthase or Complex V) produces ATP from ADP in the presence of a proton gradient across the membrane which is generated by electron transport complexes of the respiratory chain. F-type ATPases consist of two structural domains, F(1) - containing the extramembraneous catalytic core, and F(0) - containing the membrane proton channel, linked together by a central stalk and a peripheral stalk. During catalysis, ATP synthesis in the catalytic domain of F(1) is coupled via a rotary mechanism of the central stalk subunits to proton translocation. Subunits alpha and beta form the catalytic core in F(1). Rotation of the central stalk against the surrounding alpha(3)beta(3) subunits leads to hydrolysis of ATP in three separate catalytic sites on the beta subunits. The chain is ATP synthase subunit beta, mitochondrial (ATPB) from Hevea brasiliensis (Para rubber tree).